The chain runs to 243 residues: tRNA (guanine-N(1)-)-methyltransferase (243 aa).

S-adenosyl-L-methionine contacts are provided by residues Gly-123 and 143–148; that span reads LGDFVM.

It belongs to the RNA methyltransferase TrmD family. As to quaternary structure, homodimer.

It is found in the cytoplasm. It catalyses the reaction guanosine(37) in tRNA + S-adenosyl-L-methionine = N(1)-methylguanosine(37) in tRNA + S-adenosyl-L-homocysteine + H(+). Its function is as follows. Specifically methylates guanosine-37 in various tRNAs. The chain is tRNA (guanine-N(1)-)-methyltransferase from Ruegeria pomeroyi (strain ATCC 700808 / DSM 15171 / DSS-3) (Silicibacter pomeroyi).